The following is a 563-amino-acid chain: Light-independent protochlorophyllide reductase subunit B (563 aa).

Asp36 contacts [4Fe-4S] cluster. The active-site Proton donor is Asp349. Gly484–Met485 is a binding site for substrate.

This sequence belongs to the ChlB/BchB/BchZ family. Protochlorophyllide reductase is composed of three subunits; ChlL, ChlN and ChlB. Forms a heterotetramer of two ChlB and two ChlN subunits. [4Fe-4S] cluster is required as a cofactor.

Its subcellular location is the plastid. The protein resides in the chloroplast. It catalyses the reaction chlorophyllide a + oxidized 2[4Fe-4S]-[ferredoxin] + 2 ADP + 2 phosphate = protochlorophyllide a + reduced 2[4Fe-4S]-[ferredoxin] + 2 ATP + 2 H2O. It functions in the pathway porphyrin-containing compound metabolism; chlorophyll biosynthesis (light-independent). Functionally, component of the dark-operative protochlorophyllide reductase (DPOR) that uses Mg-ATP and reduced ferredoxin to reduce ring D of protochlorophyllide (Pchlide) to form chlorophyllide a (Chlide). This reaction is light-independent. The NB-protein (ChlN-ChlB) is the catalytic component of the complex. This is Light-independent protochlorophyllide reductase subunit B from Chlamydomonas moewusii (Chlamydomonas eugametos).